The following is a 247-amino-acid chain: Carbonic anhydrase (247 aa).

Residues 1–34 (MMFNKQIFTILILSLSLALAGSGCISEGAEDNVA) form the signal peptide. 93–95 (RSD) is a binding site for substrate. Glu96 functions as the Proton donor/acceptor in the catalytic mechanism. Residue 109 to 110 (QD) participates in substrate binding. Residue His115 coordinates Zn(2+). Residue Glu118 is part of the active site. Zn(2+) contacts are provided by His151 and His156. Asn236 is a substrate binding site.

This sequence belongs to the gamma-class carbonic anhydrase family. Homotrimer. It depends on Zn(2+) as a cofactor.

It localises to the secreted. It carries out the reaction hydrogencarbonate + H(+) = CO2 + H2O. Its function is as follows. Reversible hydration of carbon dioxide. Important for growth on acetate. As a probably extracellular enzyme, it may support a H(+)/CH(3)COO(-) symport mechanism and/or conversion of CO(2) to HCO(3)(-), removing excess CO(2) produced by growth on acetate. This chain is Carbonic anhydrase, found in Methanosarcina thermophila (strain ATCC 43570 / DSM 1825 / OCM 12 / VKM B-1830 / TM-1).